The sequence spans 192 residues: Xanthine phosphoribosyltransferase (192 aa).

Xanthine-binding residues include Leu20 and Asn27. 128–132 (ANGQA) contributes to the 5-phospho-alpha-D-ribose 1-diphosphate binding site. Lys156 is a xanthine binding site.

It belongs to the purine/pyrimidine phosphoribosyltransferase family. Xpt subfamily. Homodimer.

Its subcellular location is the cytoplasm. It catalyses the reaction XMP + diphosphate = xanthine + 5-phospho-alpha-D-ribose 1-diphosphate. It functions in the pathway purine metabolism; XMP biosynthesis via salvage pathway; XMP from xanthine: step 1/1. Converts the preformed base xanthine, a product of nucleic acid breakdown, to xanthosine 5'-monophosphate (XMP), so it can be reused for RNA or DNA synthesis. This Listeria monocytogenes serotype 4b (strain F2365) protein is Xanthine phosphoribosyltransferase.